Here is a 440-residue protein sequence, read N- to C-terminus: Protein CapE (440 aa).

12 consecutive transmembrane segments (helical) span residues Val7–Leu27, Ile31–Leu51, Leu60–Leu80, Phe102–Phe122, Phe141–Ile161, Glu179–Ser199, Thr204–Gly224, Trp249–Phe269, Ile324–Phe344, Tyr360–Trp380, Phe382–Ile402, and Phe409–Ile429.

It localises to the cell membrane. The protein operates within capsule biogenesis; capsule polysaccharide biosynthesis. Required for the biosynthesis of type 1 capsular polysaccharide. This Staphylococcus aureus protein is Protein CapE (capE).